We begin with the raw amino-acid sequence, 147 residues long: uncharacterized protein (147 aa).

The helical transmembrane segment at 63–79 (LFIVACSAVFATIAYIN) threads the bilayer.

This sequence belongs to the FUN14 family.

It is found in the membrane. This is an uncharacterized protein from Schizosaccharomyces pombe (strain 972 / ATCC 24843) (Fission yeast).